The chain runs to 90 residues: DNA-binding protein HRm (90 aa).

Belongs to the bacterial histone-like protein family.

Functionally, histone-like DNA-binding protein which is capable of wrapping DNA to stabilize it, and thus to prevent its denaturation under extreme environmental conditions. The sequence is that of DNA-binding protein HRm (hupB) from Rhizobium meliloti (strain 1021) (Ensifer meliloti).